Here is a 382-residue protein sequence, read N- to C-terminus: Opsin Rh5 (382 aa).

The Extracellular portion of the chain corresponds to methionine 1 to isoleucine 49. An N-linked (GlcNAc...) asparagine glycan is attached at asparagine 14. Residues tyrosine 50–isoleucine 76 traverse the membrane as a helical segment. The Cytoplasmic portion of the chain corresponds to phenylalanine 77 to asparagine 88. A helical membrane pass occupies residues leucine 89 to alanine 112. Over threonine 113–tyrosine 127 the chain is Extracellular. Residues cysteine 124 and cysteine 201 are joined by a disulfide bond. A helical transmembrane segment spans residues alanine 128–phenylalanine 147. Residues aspartate 148–glutamine 165 are Cytoplasmic-facing. Residues isoleucine 166–glycine 190 traverse the membrane as a helical segment. The Extracellular segment spans residues arginine 191 to leucine 214. A helical membrane pass occupies residues phenylalanine 215–valine 242. The Cytoplasmic portion of the chain corresponds to arginine 243–lysine 278. Residues alanine 279–cysteine 302 form a helical membrane-spanning segment. Residues phenylalanine 303–threonine 310 are Extracellular-facing. Residues proline 311 to serine 335 traverse the membrane as a helical segment. An N6-(retinylidene)lysine modification is found at lysine 322. The Cytoplasmic portion of the chain corresponds to histidine 336–asparagine 382. The disordered stretch occupies residues alanine 357–asparagine 382. The segment covering threonine 358–asparagine 382 has biased composition (polar residues).

The protein belongs to the G-protein coupled receptor 1 family. Opsin subfamily. Post-translationally, phosphorylated on some or all of the serine and threonine residues present in the C-terminal region. As to expression, expressed specifically in the retina. Each Drosophila eye is composed of 800 facets or ommatidia. Each ommatidium contains 8 photoreceptor cells (R1-R8), the R1 to R6 cells are outer cells, while R7 and R8 are inner cells. Rh5 is expressed only in R8 photoreceptor cells in a subset of ommatidia.

It localises to the cell projection. The protein localises to the rhabdomere membrane. Functionally, visual pigments are the light-absorbing molecules that mediate vision. They consist of an apoprotein, opsin, covalently linked to cis-retinal. The polypeptide is Opsin Rh5 (Rh5) (Drosophila melanogaster (Fruit fly)).